Here is a 452-residue protein sequence, read N- to C-terminus: tRNA modification GTPase MnmE (452 aa).

(6S)-5-formyl-5,6,7,8-tetrahydrofolate is bound by residues Arg21, Glu78, and Lys118. The TrmE-type G domain maps to 214-375 (GMKVVIAGRP…LREHLKQAMG (162 aa)). Asn224 lines the K(+) pocket. Residues 224-229 (NAGKSS), 243-249 (TDIAGTT), and 268-271 (DTAG) each bind GTP. Residue Ser228 participates in Mg(2+) binding. Residues Thr243, Ile245, and Thr248 each coordinate K(+). Thr249 provides a ligand contact to Mg(2+). (6S)-5-formyl-5,6,7,8-tetrahydrofolate is bound at residue Lys452.

It belongs to the TRAFAC class TrmE-Era-EngA-EngB-Septin-like GTPase superfamily. TrmE GTPase family. As to quaternary structure, homodimer. Heterotetramer of two MnmE and two MnmG subunits. K(+) is required as a cofactor.

It localises to the cytoplasm. Functionally, exhibits a very high intrinsic GTPase hydrolysis rate. Involved in the addition of a carboxymethylaminomethyl (cmnm) group at the wobble position (U34) of certain tRNAs, forming tRNA-cmnm(5)s(2)U34. The sequence is that of tRNA modification GTPase MnmE from Haemophilus influenzae (strain PittGG).